Consider the following 164-residue polypeptide: DNA-binding protein inhibitor ID-1 (164 aa).

A bHLH domain is found at 46-98 (LPALLDEQQVNVLLYDMNGCYSRLKELVPTLPQNRKVSKVEILQHVIDYIRDL). The short motif at 91 to 104 (VIDYIRDLQLELNS) is the Nuclear export signal element.

As to quaternary structure, heterodimer with other HLH proteins. Interacts with COPS5, IFI204, GATA4, NKX2-5, CLOCK and BMAL1. Isoform Short can form homodimers. Post-translationally, phosphorylated in vitro by PKA and PKC.

It localises to the cytoplasm. The protein resides in the nucleus. Its function is as follows. Transcriptional regulator (lacking a basic DNA binding domain) which negatively regulates the basic helix-loop-helix (bHLH) transcription factors by forming heterodimers and inhibiting their DNA binding and transcriptional activity. Implicated in regulating a variety of cellular processes, including cellular growth, senescence, differentiation, apoptosis, angiogenesis, and neoplastic transformation. Inhibits skeletal muscle and cardiac myocyte differentiation. Regulates the circadian clock by repressing the transcriptional activator activity of the CLOCK-BMAL1 heterodimer. In Rattus norvegicus (Rat), this protein is DNA-binding protein inhibitor ID-1 (Id1).